The primary structure comprises 153 residues: Phosphatase NudJ (153 aa).

Positions 3-131 (KPHVTVACVV…LVAESIRCYQ (129 aa)) constitute a Nudix hydrolase domain. The Nudix box signature appears at 36 to 57 (GHLEADETLVEAAARELWEETG).

It belongs to the Nudix hydrolase family. NudJ subfamily. As to quaternary structure, monomer. The cofactor is Mg(2+).

This is Phosphatase NudJ (nudJ) from Shigella boydii serotype 4 (strain Sb227).